The sequence spans 253 residues: 5'/3'-nucleotidase SurE (253 aa).

A divalent metal cation is bound by residues aspartate 8, aspartate 9, serine 39, and asparagine 92.

The protein belongs to the SurE nucleotidase family. A divalent metal cation serves as cofactor.

The protein localises to the cytoplasm. The catalysed reaction is a ribonucleoside 5'-phosphate + H2O = a ribonucleoside + phosphate. It catalyses the reaction a ribonucleoside 3'-phosphate + H2O = a ribonucleoside + phosphate. The enzyme catalyses [phosphate](n) + H2O = [phosphate](n-1) + phosphate + H(+). Nucleotidase with a broad substrate specificity as it can dephosphorylate various ribo- and deoxyribonucleoside 5'-monophosphates and ribonucleoside 3'-monophosphates with highest affinity to 3'-AMP. Also hydrolyzes polyphosphate (exopolyphosphatase activity) with the preference for short-chain-length substrates (P20-25). Might be involved in the regulation of dNTP and NTP pools, and in the turnover of 3'-mononucleotides produced by numerous intracellular RNases (T1, T2, and F) during the degradation of various RNAs. This chain is 5'/3'-nucleotidase SurE, found in Enterobacter sp. (strain 638).